The sequence spans 5571 residues: Polyketide synthase GfsB (5571 aa).

A disordered region spans residues 1–27 (MSVPPPGATPSRTSRTKGLKDRPRMEN). A compositionally biased stretch (basic and acidic residues) spans 18-27 (GLKDRPRMEN). A Ketosynthase family 3 (KS3) 1 domain is found at 57 to 483 (QEPVAIIGMS…GTNAHVIIEQ (427 aa)). Module stretches follow at residues 57–2148 (QEPV…RDTL), 2167–3728 (DEPL…GSQV), and 3746–5485 (DEPV…HTHL). Active-site for beta-ketoacyl synthase 1 activity residues include Cys-230, His-365, and His-405. Positions 485-518 (PAIEGTGLGDDAPPTAEHPEERTPADGGPAPQPV) are disordered. Residues 611-926 (FVFPGQGSQW…LRSLAEAYAH (316 aa)) form the Malonyl-CoA:ACP transacylase (MAT) 1 domain. The tract at residues 976–1109 (HPLLAAATSL…GYLAVGAHEP (134 aa)) is N-terminal hotdog fold 1. Residues 976 to 1264 (HPLLAAATSL…LRPLATNQAP (289 aa)) form the PKS/mFAS DH 1 domain. His-1008 functions as the Proton acceptor; for dehydratase activity 1 in the catalytic mechanism. Residues 1122–1264 (ATPLDVTDLY…LRPLATNQAP (143 aa)) form a C-terminal hotdog fold 1 region. The active-site Proton donor; for dehydratase activity 1 is Asp-1183. An Enoyl reductase (ER) domain is found at 1478–1777 (GTLDHLTLIP…QARHIGKIVL (300 aa)). The region spanning 1787–1966 (GTVLVTGATG…TSLAWGLWEE (180 aa)) is the Ketoreductase (KR) 1 domain. The Carrier 1 domain occupies 2073–2148 (RIVNDLVRDH…ELAAHLRDTL (76 aa)). O-(pantetheine 4'-phosphoryl)serine is present on Ser-2108. Residues 2167–2593 (DEPLAVVAMS…GTNAHVILEQ (427 aa)) enclose the Ketosynthase family 3 (KS3) 2 domain. Active-site for beta-ketoacyl synthase 2 activity residues include Cys-2340, His-2475, and His-2515. The region spanning 2710–3016 (VFSGQGSQRP…AAVALQRGNR (307 aa)) is the Malonyl-CoA:ACP transacylase (MAT) 2 domain. A Ketoreductase (KR) 2 domain is found at 3373–3551 (GTVLVTGGTG…VSVAWGPWAE (179 aa)). A Carrier 2 domain is found at 3653–3728 (TALLDLVRGQ…ALAEYVGSQV (76 aa)). Ser-3688 carries the O-(pantetheine 4'-phosphoryl)serine modification. Residues 3746 to 4172 (DEPVAIIGMS…GTNAHVILEQ (427 aa)) enclose the Ketosynthase family 3 (KS3) 3 domain. Catalysis depends on for beta-ketoacyl synthase 3 activity residues Cys-3919, His-4054, and His-4094. A Malonyl-CoA:ACP transacylase (MAT) 3 domain is found at 4279–4601 (FLFSGQGSQR…ATAHVNGVQP (323 aa)). Residues 4649-4774 (HPLLAGVVDL…GALTVAEAVD (126 aa)) are N-terminal hotdog fold 2. A PKS/mFAS DH 2 domain is found at 4649–4931 (HPLLAGVVDL…TRPIAAGQLA (283 aa)). The Proton acceptor; for dehydratase activity 2 role is filled by His-4681. The tract at residues 4787 to 4931 (AIEVELDDPY…TRPIAAGQLA (145 aa)) is C-terminal hotdog fold 2. Residue Asp-4848 is the Proton donor; for dehydratase activity 2 of the active site. A Ketoreductase (KR) 3 domain is found at 5134–5306 (LLVTGASGVL…TSLSWGLWAE (173 aa)). Residues 5410 to 5485 (RMVLDLVRDR…ALARYLHTHL (76 aa)) enclose the Carrier 3 domain. Ser-5445 bears the O-(pantetheine 4'-phosphoryl)serine mark.

The cofactor is pantetheine 4'-phosphate.

It functions in the pathway antibiotic biosynthesis. Its function is as follows. Second protein in the synthesis of the 16-membered macrolide antibiotics FD-891 and FD-892. Composed of 3 modules. Modifies the product of GfsA by multiple rounds of addition of malonyl-CoA or methylmalonyl-CoA and other modifications to help generate the final products. This Streptomyces halstedii protein is Polyketide synthase GfsB.